The primary structure comprises 177 residues: Protein FATTY ACID EXPORT 4, chloroplastic (177 aa).

A chloroplast-targeting transit peptide spans 1-63 (MWSLALTLPS…AELSELAPVV (63 aa)). 3 consecutive transmembrane segments (helical) span residues 85 to 105 (KGSLFGGLTGSVLMASAYFLT), 111 to 131 (RVLGDTIGLGAAFLFSSVFGF), and 140 to 160 (VPAGPLLLLSIGMLSFFVMAY).

Belongs to the TMEM14 family.

It localises to the plastid. It is found in the chloroplast membrane. Functionally, may be involved in free fatty acids export from the plastids. The polypeptide is Protein FATTY ACID EXPORT 4, chloroplastic (Arabidopsis thaliana (Mouse-ear cress)).